A 39-amino-acid chain; its full sequence is Conotoxin Cl14.5 (39 aa).

A propeptide spanning residues 1–16 (PVNEAGVERLFRALVG) is cleaved from the precursor. P38 is modified (proline amide).

Contains 2 disulfide bonds. As to expression, expressed by the venom duct.

The protein resides in the secreted. The polypeptide is Conotoxin Cl14.5 (Californiconus californicus (California cone)).